The sequence spans 37 residues: Esculentin-2SE (37 aa).

C31 and C37 are joined by a disulfide.

In terms of tissue distribution, expressed by the skin glands.

The protein localises to the secreted. Functionally, mast cell degranulating peptide. Causes histamine release from rat peritoneal mast cells in vitro. Has antibacterial activity against the Gram-negative bacterium E.coli K12 and Gram-positive bacterium M.luteus NCT C2665. This is Esculentin-2SE from Lithobates sevosus (Dusky gopher frog).